The chain runs to 366 residues: Histidinol-phosphate aminotransferase 2 (366 aa).

The residue at position 226 (Lys226) is an N6-(pyridoxal phosphate)lysine.

Belongs to the class-II pyridoxal-phosphate-dependent aminotransferase family. Histidinol-phosphate aminotransferase subfamily. As to quaternary structure, homodimer. It depends on pyridoxal 5'-phosphate as a cofactor.

The catalysed reaction is L-histidinol phosphate + 2-oxoglutarate = 3-(imidazol-4-yl)-2-oxopropyl phosphate + L-glutamate. The protein operates within amino-acid biosynthesis; L-histidine biosynthesis; L-histidine from 5-phospho-alpha-D-ribose 1-diphosphate: step 7/9. The protein is Histidinol-phosphate aminotransferase 2 (hisC2) of Haemophilus influenzae (strain ATCC 51907 / DSM 11121 / KW20 / Rd).